Here is a 424-residue protein sequence, read N- to C-terminus: Endoglucanase (424 aa).

A signal peptide spans 1 to 19 (MHRCMPLVAASMAALMLAG). Cysteine 20 carries N-palmitoyl cysteine lipidation. Residue cysteine 20 is the site of S-diacylglycerol cysteine attachment. The propeptide occupies 20–43 (CGGGDGDTTLSTAAATDTTTLKTA). Glutamate 247 functions as the Proton donor in the catalytic mechanism. Glutamate 359 (nucleophile) is an active-site residue.

It belongs to the glycosyl hydrolase 5 (cellulase A) family.

The protein resides in the cell membrane. The enzyme catalyses Endohydrolysis of (1-&gt;4)-beta-D-glucosidic linkages in cellulose, lichenin and cereal beta-D-glucans.. The chain is Endoglucanase (egl) from Ralstonia nicotianae (strain ATCC BAA-1114 / GMI1000) (Ralstonia solanacearum).